The primary structure comprises 350 residues: GTPase Obg (350 aa).

One can recognise an Obg domain in the interval 1–158 (MFIDSVKITL…RLVRLELKLI (158 aa)). The OBG-type G domain maps to 159–339 (ADVGLVGFPN…LKFMLLEEIK (181 aa)). Residues 165 to 172 (GFPNVGKS), 190 to 194 (FTTLT), 212 to 215 (DIPG), 280 to 283 (SKSD), and 320 to 322 (SSL) contribute to the GTP site. Residues Ser-172 and Thr-192 each coordinate Mg(2+).

It belongs to the TRAFAC class OBG-HflX-like GTPase superfamily. OBG GTPase family. As to quaternary structure, monomer. The cofactor is Mg(2+).

It localises to the cytoplasm. Its function is as follows. An essential GTPase which binds GTP, GDP and possibly (p)ppGpp with moderate affinity, with high nucleotide exchange rates and a fairly low GTP hydrolysis rate. Plays a role in control of the cell cycle, stress response, ribosome biogenesis and in those bacteria that undergo differentiation, in morphogenesis control. This Campylobacter jejuni (strain RM1221) protein is GTPase Obg.